The sequence spans 273 residues: 4-hydroxy-tetrahydrodipicolinate reductase (273 aa).

NAD(+) is bound by residues 12-17 (GAGGRM) and E38. Position 39 (R39) interacts with NADP(+). Residues 102 to 104 (GTT) and 126 to 129 (AANF) contribute to the NAD(+) site. H159 (proton donor/acceptor) is an active-site residue. (S)-2,3,4,5-tetrahydrodipicolinate is bound at residue H160. K163 acts as the Proton donor in catalysis. 169–170 (GT) contacts (S)-2,3,4,5-tetrahydrodipicolinate.

This sequence belongs to the DapB family. Homotetramer.

It localises to the cytoplasm. The enzyme catalyses (S)-2,3,4,5-tetrahydrodipicolinate + NAD(+) + H2O = (2S,4S)-4-hydroxy-2,3,4,5-tetrahydrodipicolinate + NADH + H(+). The catalysed reaction is (S)-2,3,4,5-tetrahydrodipicolinate + NADP(+) + H2O = (2S,4S)-4-hydroxy-2,3,4,5-tetrahydrodipicolinate + NADPH + H(+). Its pathway is amino-acid biosynthesis; L-lysine biosynthesis via DAP pathway; (S)-tetrahydrodipicolinate from L-aspartate: step 4/4. Catalyzes the conversion of 4-hydroxy-tetrahydrodipicolinate (HTPA) to tetrahydrodipicolinate. In Salmonella enteritidis PT4 (strain P125109), this protein is 4-hydroxy-tetrahydrodipicolinate reductase.